The primary structure comprises 435 residues: ATP-dependent protease ATPase subunit HslU (435 aa).

ATP is bound by residues V18, 60 to 65, D248, E313, and R385; that span reads GVGKTE.

The protein belongs to the ClpX chaperone family. HslU subfamily. In terms of assembly, a double ring-shaped homohexamer of HslV is capped on each side by a ring-shaped HslU homohexamer. The assembly of the HslU/HslV complex is dependent on binding of ATP.

It is found in the cytoplasm. In terms of biological role, ATPase subunit of a proteasome-like degradation complex; this subunit has chaperone activity. The binding of ATP and its subsequent hydrolysis by HslU are essential for unfolding of protein substrates subsequently hydrolyzed by HslV. HslU recognizes the N-terminal part of its protein substrates and unfolds these before they are guided to HslV for hydrolysis. This Parvibaculum lavamentivorans (strain DS-1 / DSM 13023 / NCIMB 13966) protein is ATP-dependent protease ATPase subunit HslU.